The chain runs to 174 residues: Chorismate pyruvate-lyase (174 aa).

The substrate site is built by methionine 36, arginine 78, leucine 116, and glutamate 157.

This sequence belongs to the UbiC family. In terms of assembly, monomer.

The protein localises to the cytoplasm. The catalysed reaction is chorismate = 4-hydroxybenzoate + pyruvate. It functions in the pathway cofactor biosynthesis; ubiquinone biosynthesis. In terms of biological role, removes the pyruvyl group from chorismate, with concomitant aromatization of the ring, to provide 4-hydroxybenzoate (4HB) for the ubiquinone pathway. The sequence is that of Chorismate pyruvate-lyase from Erwinia tasmaniensis (strain DSM 17950 / CFBP 7177 / CIP 109463 / NCPPB 4357 / Et1/99).